The primary structure comprises 244 residues: Small ribosomal subunit protein uS2 (244 aa).

Residues 224–244 (GQQGSDEAEEAEEAAEEVVAE) are disordered. Acidic residues predominate over residues 229–244 (DEAEEAEEAAEEVVAE).

The protein belongs to the universal ribosomal protein uS2 family.

This chain is Small ribosomal subunit protein uS2, found in Desulfitobacterium hafniense (strain DSM 10664 / DCB-2).